A 517-amino-acid polypeptide reads, in one-letter code: Probable mannosyltransferase KTR7 (517 aa).

The Cytoplasmic portion of the chain corresponds to 1 to 23 (MAIRLNPKVRRFLLDKCRQKRYG). The chain crosses the membrane as a helical; Signal-anchor for type II membrane protein span at residues 24–44 (FLFLGCIFAILYCMGTWPFFA). A stem region region spans residues 45–85 (KDIVHDPNNLPYSLQDYSTDKDEPFFRGCTDTKLYLQNPAY). At 45–517 (KDIVHDPNNL…IRRENFRVIE (473 aa)) the chain is on the lumenal side. The interval 86–517 (SKMNASFVML…IRRENFRVIE (432 aa)) is catalytic. N-linked (GlcNAc...) asparagine glycosylation is found at Asn89 and Asn144. Catalysis depends on Glu367, which acts as the Nucleophile.

This sequence belongs to the glycosyltransferase 15 family.

The protein localises to the membrane. In terms of biological role, possible glycosyltransferase that transfers an alpha-D-mannosyl residue from GDP-mannose into lipid-linked oligosaccharide, forming an alpha-(1-&gt;2)-D-mannosyl-D-mannose linkage. This is Probable mannosyltransferase KTR7 (KTR7) from Saccharomyces cerevisiae (strain ATCC 204508 / S288c) (Baker's yeast).